Consider the following 428-residue polypeptide: MEHISTTTLIIILIIMVVISAYFSGSETGMMTLNRYRLRHMAKQGNRSAKRVEKLLRKPDRLISLVLIGNNLVNILASALGTIVGMRLYGDAGVAIATGVLTFVVLVFAEVLPKTIAALYPEKVAYPSSFLLAPLQILMMPLVWLLNAITRMLMRMMGIKTDIVVSGSLSKEELRTIVHESRSQISRRNQDMLLSVLDLEKMTVDDIMVPRSEIIGIDINDDWKSILRQLSHSPHGRIVLYRDSLDDAISMLRVREAWRLMSEKKEFTKETMLRAADEIYFVPEGTPLSTQLVKFQRNKKKVGLVVNEYGDIQGLVTVEDILEEIVGDFTTSMSPTLAEEVTPQNDGSVIIDGTANVREINKAFNWHLPEDDARTVNGVILEALEEIPVAGTRVRIGEYDIDILDVQDNMIKQVKVFPVKPLRESVAE.

Topologically, residues 1–3 (MEH) are cytoplasmic. Residues 2–192 (EHISTTTLII…SQISRRNQDM (191 aa)) form the CNNM transmembrane domain. A helical transmembrane segment spans residues 4–24 (ISTTTLIIILIIMVVISAYFS). At 25 to 64 (GSETGMMTLNRYRLRHMAKQGNRSAKRVEKLLRKPDRLIS) the chain is on the periplasmic side. The chain crosses the membrane as a helical span at residues 65–85 (LVLIGNNLVNILASALGTIVG). Over 86–91 (MRLYGD) the chain is Cytoplasmic. Residues 92-112 (AGVAIATGVLTFVVLVFAEVL) traverse the membrane as a helical segment. The Periplasmic segment spans residues 113–129 (PKTIAALYPEKVAYPSS). A helical transmembrane segment spans residues 130 to 150 (FLLAPLQILMMPLVWLLNAIT). At 151–428 (RMLMRMMGIK…VKPLRESVAE (278 aa)) the chain is on the cytoplasmic side. 2 consecutive CBS domains span residues 208–270 (MVPR…FTKE) and 272–332 (MLRA…FTTS).

The protein belongs to the UPF0053 family.

It is found in the cell inner membrane. The protein is UPF0053 inner membrane protein YfjD (yfjD) of Escherichia coli (strain K12).